Consider the following 387-residue polypeptide: Protein TsgA homolog (387 aa).

Helical transmembrane passes span 11 to 31 (WISF…GMIM), 47 to 67 (NIFT…SWLI), 76 to 96 (LIFG…STSI), 101 to 121 (INIF…TFII), 134 to 154 (LLLT…ISAY), 160 to 180 (ILWY…FILT), 205 to 225 (IILL…FISW), 243 to 263 (VLVS…SFII), 271 to 291 (MFIF…YSKS), 299 to 319 (IISL…LASL), 331 to 351 (LILF…SPIV), and 358 to 378 (TTLI…CIIF).

Belongs to the major facilitator superfamily. TsgA family.

It is found in the cell membrane. This Buchnera aphidicola subsp. Schizaphis graminum (strain Sg) protein is Protein TsgA homolog.